Reading from the N-terminus, the 180-residue chain is Prorelaxin (180 aa).

A signal peptide spans 1–25 (MLRLFLSHLLGVWLLLSLRARKIPA). Disulfide bonds link cysteine 33/cysteine 167, cysteine 45/cysteine 180, and cysteine 166/cysteine 171. A propeptide spans 53–154 (SSQQHREPRQ…RSRLDAHSRI (102 aa)) (connecting peptide).

Belongs to the insulin family. In terms of assembly, heterodimer of a B chain and an A chain linked by two disulfide bonds. As to expression, expressed by the placenta. Exclusively detected in cells located in the lamellar placental labyrinth and absent from other placental and non-placental uterine parts.

It is found in the secreted. Functionally, relaxin is an ovarian hormone that acts with estrogen to produce dilatation of the birth canal in many mammals. The sequence is that of Prorelaxin (RLN) from Felis catus (Cat).